The chain runs to 360 residues: uncharacterized protein (360 aa).

3 Solcar repeats span residues 34–153 (VGVL…LSVW), 172–256 (PDWS…FKTN), and 266–355 (NPFV…FKFL). 6 consecutive transmembrane segments (helical) span residues 40–60 (VSAS…LDVV), 125–145 (LWSG…FYFT), 178–198 (AVAG…IEMI), 225–247 (ISSF…GIYW), 269–289 (VVSF…THPF), and 327–348 (FSSG…MISF).

Belongs to the mitochondrial carrier (TC 2.A.29) family.

The protein localises to the mitochondrion inner membrane. This is an uncharacterized protein from Caenorhabditis elegans.